We begin with the raw amino-acid sequence, 870 residues long: MFSTRRLKKKSQSVDIAASGYNPLSDASAPQASRVPPPIVKAISEEEHHNTTNAQKRHLRRGDLKRGYTIDTGQKKTLEKKDGRRMSFQRPKGTMEYTVETRDSLNSIALKFDTTPNELVQLNKLFSRAVVPGQLLYVPDPDYISSVESSPSLSPISPLSPTSSEAEFEKSTDTERMPYKEITSSPAYSAIRPSRVVSSTSEEEEAFTEKFLKINCKYITDGKGTVNGVLLVTPNNIMFDPHKNDLLVQEKGCEEYGIMCPMEEVTSAAMYKEIVNSKLKDSVSVDVGQLSCMREFCHLKKISPGNLHDIDSQMWDAGNDSASTAPRSTEESLSEDVFTESELSPIREEHLSSDELRQDKSSGASSESVQTINQNITECSLNISDCVSASDDVKDSLEPSGNDSGIVASINDLEKSEASINAGEGVDKDISESSLILTEAIEGHNSNDGILSSNKDKQTGDQNHSREAAFVRNHQHETVQEEAVKQSFGDSETEAEELRKFWKDLTMQQAKQQREDMQHTTQKEIMGKMPTAETHIEGVCSSVAKEKRRHRSHRYLCLRVGKPMRKTFVSQASASMQQYAQRDKLEYWFAVPHERSDHLYSFFIQWSPELYAEEVRESAREPGFVVVKKNEETEGSDCSTNDSAARLWEVVSVAEYHRRIDALNTEELRTLCRRLKITTREDVNSKQATNIKNDQEPESFRPNLSDPSSLLQTDQIEKLTKHLPPRTIGYPWTLVYSTAKHGMSLKTLYRTMLGLDTPVLLVIKDSDAQIFGALASEPFKISDCFYGTGETFLFTFCPDFEVFKWTGDNMFFIKGDMDSLAFGGGGGEFALWLDGDLYHGRSHTCKTFGNCILSKKEDFIVQDIEIWAFE.

Residues glutamate 45–arginine 90 form a disordered region. A compositionally biased stretch (basic and acidic residues) spans arginine 61–arginine 85. A LysM domain is found at methionine 95–valine 138. Low complexity predominate over residues serine 149–glutamate 165. Residues serine 149–methionine 177 are disordered. Residues glutamate 167–methionine 177 are compositionally biased toward basic and acidic residues. One can recognise a GRAM domain in the interval glutamate 209 to serine 267. 4 disordered regions span residues glutamine 313–valine 369, asparagine 445–histidine 464, asparagine 473–glutamate 492, and lysine 686–serine 708. 3 stretches are compositionally biased toward basic and acidic residues: residues proline 345–lysine 360, asparagine 454–histidine 464, and asparagine 473–valine 484. In terms of domain architecture, TLDc spans serine 709–glutamate 870.

It belongs to the OXR1 family.

It localises to the mitochondrion. In terms of biological role, may be involved in protection from oxidative damage. The chain is Oxidation resistance protein 1 (oxr1) from Xenopus tropicalis (Western clawed frog).